The chain runs to 232 residues: Small heat shock protein, chloroplastic (232 aa).

Over residues 1–25 (MAQSVSLSTIASPILSQKPGSSVKS) the composition is skewed to polar residues. Disordered stretches follow at residues 1 to 35 (MAQS…SFPL) and 48 to 81 (RAQA…RKPR). Residues 1–46 (MAQSVSLSTIASPILSQKPGSSVKSTPPCMASFPLRRQLPRLGLRN) constitute a chloroplast transit peptide. Over residues 55-78 (GDNKDNSVEVHRVNKDDQGTAVER) the composition is skewed to basic and acidic residues. One can recognise a sHSP domain in the interval 124 to 232 (IGGGEIRVPW…ERTVIDVQIQ (109 aa)).

The protein belongs to the small heat shock protein (HSP20) family.

It localises to the plastid. The protein resides in the chloroplast. In Pisum sativum (Garden pea), this protein is Small heat shock protein, chloroplastic (HSP21).